Consider the following 1412-residue polypeptide: DNA-directed RNA polymerase subunit beta' (1412 aa).

The Zn(2+) site is built by Cys-70, Cys-72, Cys-85, and Cys-88. Residues Asp-460, Asp-462, and Asp-464 each contribute to the Mg(2+) site. Positions 819, 893, 900, and 903 each coordinate Zn(2+). Residues 1391 to 1412 (AEESFEFGTPETPAAEQQHSGE) are disordered.

Belongs to the RNA polymerase beta' chain family. The RNAP catalytic core consists of 2 alpha, 1 beta, 1 beta' and 1 omega subunit. When a sigma factor is associated with the core the holoenzyme is formed, which can initiate transcription. It depends on Mg(2+) as a cofactor. The cofactor is Zn(2+).

The catalysed reaction is RNA(n) + a ribonucleoside 5'-triphosphate = RNA(n+1) + diphosphate. Functionally, DNA-dependent RNA polymerase catalyzes the transcription of DNA into RNA using the four ribonucleoside triphosphates as substrates. This is DNA-directed RNA polymerase subunit beta' from Paraburkholderia phytofirmans (strain DSM 17436 / LMG 22146 / PsJN) (Burkholderia phytofirmans).